A 37-amino-acid polypeptide reads, in one-letter code: Potassium channel toxin alpha-KTx 1.3 (37 aa).

Position 1 is a pyrrolidone carboxylic acid (glutamine 1). 3 cysteine pairs are disulfide-bonded: cysteine 7/cysteine 28, cysteine 13/cysteine 33, and cysteine 17/cysteine 35. The tract at residues glycine 26–cysteine 33 is interaction with Ca(2+)-activated K(+) channels.

This sequence belongs to the short scorpion toxin superfamily. Potassium channel inhibitor family. Alpha-KTx 01 subfamily. As to expression, expressed by the venom gland.

The protein localises to the secreted. Blocks selectively the high conductance calcium-activated (maxi-K) potassium channels (KCa1.1/KCNMA1). In Hottentotta tamulus (Eastern Indian scorpion), this protein is Potassium channel toxin alpha-KTx 1.3.